Consider the following 574-residue polypeptide: Penicillin-binding protein activator LpoA (574 aa).

The signal sequence occupies residues 1–25 (MTILLQRAKFKKRLMPILFPLMLAG). Cys26 carries N-palmitoyl cysteine lipidation. The S-diacylglycerol cysteine moiety is linked to residue Cys26.

The protein belongs to the LpoA family. In terms of assembly, interacts with PBP1a.

The protein localises to the cell outer membrane. Functionally, regulator of peptidoglycan synthesis that is essential for the function of penicillin-binding protein 1A (PBP1a). In Mannheimia succiniciproducens (strain KCTC 0769BP / MBEL55E), this protein is Penicillin-binding protein activator LpoA.